The sequence spans 562 residues: Dihydroxy-acid dehydratase (562 aa).

Residue Cys-53 coordinates [2Fe-2S] cluster. Asp-85 is a Mg(2+) binding site. Residue Cys-126 participates in [2Fe-2S] cluster binding. Positions 127 and 128 each coordinate Mg(2+). Residue Lys-128 is modified to N6-carboxylysine. Cys-198 contributes to the [2Fe-2S] cluster binding site. Residue Glu-449 coordinates Mg(2+). Residue Ser-475 is the Proton acceptor of the active site.

The protein belongs to the IlvD/Edd family. Homodimer. It depends on [2Fe-2S] cluster as a cofactor. Mg(2+) serves as cofactor.

It catalyses the reaction (2R)-2,3-dihydroxy-3-methylbutanoate = 3-methyl-2-oxobutanoate + H2O. The catalysed reaction is (2R,3R)-2,3-dihydroxy-3-methylpentanoate = (S)-3-methyl-2-oxopentanoate + H2O. It participates in amino-acid biosynthesis; L-isoleucine biosynthesis; L-isoleucine from 2-oxobutanoate: step 3/4. The protein operates within amino-acid biosynthesis; L-valine biosynthesis; L-valine from pyruvate: step 3/4. In terms of biological role, functions in the biosynthesis of branched-chain amino acids. Catalyzes the dehydration of (2R,3R)-2,3-dihydroxy-3-methylpentanoate (2,3-dihydroxy-3-methylvalerate) into 2-oxo-3-methylpentanoate (2-oxo-3-methylvalerate) and of (2R)-2,3-dihydroxy-3-methylbutanoate (2,3-dihydroxyisovalerate) into 2-oxo-3-methylbutanoate (2-oxoisovalerate), the penultimate precursor to L-isoleucine and L-valine, respectively. The chain is Dihydroxy-acid dehydratase from Methylococcus capsulatus (strain ATCC 33009 / NCIMB 11132 / Bath).